A 333-amino-acid polypeptide reads, in one-letter code: DNA-directed RNA polymerase subunit alpha (333 aa).

The tract at residues 1–246 (MKKMVQIKYK…AHLQVIGDVK (246 aa)) is alpha N-terminal domain (alpha-NTD). Residues 262–333 (VEPSIHSVDI…YNVTLNRGEK (72 aa)) form an alpha C-terminal domain (alpha-CTD) region.

The protein belongs to the RNA polymerase alpha chain family. In terms of assembly, homodimer. The RNAP catalytic core consists of 2 alpha, 1 beta, 1 beta' and 1 omega subunit. When a sigma factor is associated with the core the holoenzyme is formed, which can initiate transcription.

It carries out the reaction RNA(n) + a ribonucleoside 5'-triphosphate = RNA(n+1) + diphosphate. DNA-dependent RNA polymerase catalyzes the transcription of DNA into RNA using the four ribonucleoside triphosphates as substrates. The sequence is that of DNA-directed RNA polymerase subunit alpha from Mycoplasmopsis pulmonis (strain UAB CTIP) (Mycoplasma pulmonis).